Reading from the N-terminus, the 637-residue chain is ATP-dependent zinc metalloprotease FtsH (637 aa).

Topologically, residues 1-7 (MNRVFRN) are cytoplasmic. A helical transmembrane segment spans residues 8 to 28 (TIFYLLILLVVIGVVSYFQTS). At 29–109 (NPKTENMSYS…VEPAQETSGW (81 aa)) the chain is on the extracellular side. A helical membrane pass occupies residues 110–130 (VTFLTTIIPFVIIFILFFFLL). Residues 131–637 (NQAQGGGSRV…TEEKKDDTKE (507 aa)) are Cytoplasmic-facing. Position 201–208 (201–208 (GPPGTGKT)) interacts with ATP. Position 423 (His423) interacts with Zn(2+). Glu424 is an active-site residue. Residues His427 and Asp499 each contribute to the Zn(2+) site. The segment at 514–637 (FGMSEKLGPL…TEEKKDDTKE (124 aa)) is not necessary for FtsH function.

The protein in the central section; belongs to the AAA ATPase family. This sequence in the C-terminal section; belongs to the peptidase M41 family. Homohexamer. Interacts with FloT at midcell. Interacts with FloA at midcell. Another study shows only minor colocalization with FloA or FloT. Zn(2+) serves as cofactor.

It localises to the cell membrane. It is found in the membrane raft. Its function is as follows. Acts as a processive, ATP-dependent zinc metallopeptidase for both cytoplasmic and membrane proteins. Plays a role in the quality control of integral membrane proteins. Functionally, in vitro partially degrades Spo0E, the phosphatase that acts on Spo0A-P. Recognition requires the last 14 residues of Spo0E. Its stabile accumulation requires FlotA and Flot. May degrade EzrA. This Bacillus subtilis (strain 168) protein is ATP-dependent zinc metalloprotease FtsH.